Reading from the N-terminus, the 467-residue chain is UDP-N-acetylmuramate--L-alanine ligase (467 aa).

112–118 (GTHGKTT) contacts ATP.

This sequence belongs to the MurCDEF family.

The protein resides in the cytoplasm. The enzyme catalyses UDP-N-acetyl-alpha-D-muramate + L-alanine + ATP = UDP-N-acetyl-alpha-D-muramoyl-L-alanine + ADP + phosphate + H(+). It participates in cell wall biogenesis; peptidoglycan biosynthesis. Functionally, cell wall formation. This Paraburkholderia phytofirmans (strain DSM 17436 / LMG 22146 / PsJN) (Burkholderia phytofirmans) protein is UDP-N-acetylmuramate--L-alanine ligase.